Here is a 594-residue protein sequence, read N- to C-terminus: Acyl-coenzyme A thioesterase 11 (594 aa).

A mitochondrion-targeting transit peptide spans 1-20; that stretch reads MIQNVGNHLRRGFASMFSNR. Phosphoserine is present on residues S15 and S25. The tract at residues 20–43 is disordered; that stretch reads RTSRKSISHPESGDPPTMAEGEGY. Residues 45–157 form the HotDog ACOT-type 1 domain; that stretch reads NPTEVQMSQL…LATFVAHREL (113 aa). Residues 93–95, 122–124, R183, and 272–274 each bind CoA; these read TAS, NSS, and HFR. A HotDog ACOT-type 2 domain is found at 217-330; sequence EKTRVESVEL…FMTFVVLDKD (114 aa). An START domain is found at 370–582; the sequence is KQAEVALSVP…FKACESFLLD (213 aa).

The protein resides in the mitochondrion matrix. It is found in the cytoplasm. It carries out the reaction hexadecanoyl-CoA + H2O = hexadecanoate + CoA + H(+). It catalyses the reaction tetradecanoyl-CoA + H2O = tetradecanoate + CoA + H(+). The enzyme catalyses dodecanoyl-CoA + H2O = dodecanoate + CoA + H(+). The catalysed reaction is butanoyl-CoA + H2O = butanoate + CoA + H(+). It participates in lipid metabolism; fatty acid metabolism. In terms of biological role, has an acyl-CoA thioesterase activity with a preference for the long chain fatty acyl-CoA thioesters hexadecanoyl-CoA/palmitoyl-CoA and tetradecanoyl-CoA/myristoyl-CoA which are the main substrates in the mitochondrial beta-oxidation pathway. The polypeptide is Acyl-coenzyme A thioesterase 11 (Acot11) (Mus musculus (Mouse)).